Consider the following 325-residue polypeptide: Phospho-N-acetylmuramoyl-pentapeptide-transferase (325 aa).

A run of 9 helical transmembrane segments spans residues 7–27 (LFVL…FIPF), 57–77 (IVIV…ITGF), 81–101 (LLLL…DDYL), 122–142 (VIAA…FIAI), 146–166 (TFGF…LLGA), 186–206 (IAFG…TALF), 227–247 (VFMG…IAIL), 252–272 (LMLI…IIQV), and 302–322 (VVVT…YIGV).

Belongs to the glycosyltransferase 4 family. MraY subfamily. The cofactor is Mg(2+).

The protein localises to the cell membrane. The enzyme catalyses UDP-N-acetyl-alpha-D-muramoyl-L-alanyl-gamma-D-glutamyl-meso-2,6-diaminopimeloyl-D-alanyl-D-alanine + di-trans,octa-cis-undecaprenyl phosphate = di-trans,octa-cis-undecaprenyl diphospho-N-acetyl-alpha-D-muramoyl-L-alanyl-D-glutamyl-meso-2,6-diaminopimeloyl-D-alanyl-D-alanine + UMP. Its pathway is cell wall biogenesis; peptidoglycan biosynthesis. Functionally, catalyzes the initial step of the lipid cycle reactions in the biosynthesis of the cell wall peptidoglycan: transfers peptidoglycan precursor phospho-MurNAc-pentapeptide from UDP-MurNAc-pentapeptide onto the lipid carrier undecaprenyl phosphate, yielding undecaprenyl-pyrophosphoryl-MurNAc-pentapeptide, known as lipid I. This chain is Phospho-N-acetylmuramoyl-pentapeptide-transferase, found in Shouchella clausii (strain KSM-K16) (Alkalihalobacillus clausii).